The chain runs to 334 residues: Kihadalactone A synthase LFS (334 aa).

Residues 181-286 (KTASYSNMFH…RYSTGLFLCP (106 aa)) form the Fe2OG dioxygenase domain. Fe cation-binding residues include H208, D210, and H269. R277 contributes to the 2-oxoglutarate binding site.

This sequence belongs to the iron/ascorbate-dependent oxidoreductase family. Fe(2+) is required as a cofactor. As to expression, expressed in maturing fruits and in juice vesicles.

It carries out the reaction (1R,2R,3S,8R,10R,11R,15S,16S)-3-(acetyloxy)-15-(1-hydroxy-4-oxobutan-2-yl)-2,7,7,11,16-pentamethyl-5-oxo-6-oxatetracyclo[9.7.0.0(2,8).0(12,16)]octadec-12-en-10-yl acetate + 2-oxoglutarate + O2 = kihadalactone A + succinate + CO2 + 2 H2O. The protein operates within secondary metabolite biosynthesis; terpenoid biosynthesis. 2-oxoglutarate-Fe(II) type oxidoreductase involved in the biosynthesis of limonoids triterpene natural products such as limonin, a compound with insecticidal activity responsible for the bitter taste in citrus. Catalyzes the formation of kihadalactone A. This Citrus sinensis (Sweet orange) protein is Kihadalactone A synthase LFS.